We begin with the raw amino-acid sequence, 381 residues long: Terpene cyclase ATR13 (381 aa).

Belongs to the terpene synthase family.

It functions in the pathway mycotoxin biosynthesis. Terpene cyclase; part of the core atranone cluster (CAC) which products are predicted to catalyze most or all steps of mycotoxin atranone synthesis, starting from geranylgeranyl pyrophosphate (GGPP). The initial cyclization of GGPP to dolabellane is probably performed by the terpene cyclase ATR13. The Baeyer-Villiger oxidation near the end of the atranone synthesis, which converts atranones D and E to atranones F and G is predicted to be catalyzed by the monooxygenase ATR8. Of the CAC's other predicted gene products, the reducing PKS ATR6 might synthesize a polyketide chain. This polyketide is probably transferred onto the atranone backbone by the polyketide transferase ATR5. Other predicted CAC products include 4 oxygenases (ATR2, ATR3, ATR4, and ATR14), 3 short-chain reductases (ATR7, ATR9, and ATR10), and a methyltransferase (ATR12). These may all be involved in the various steps of atranone biosynthesis, although their specific roles must await experimental determination. The polypeptide is Terpene cyclase ATR13 (Stachybotrys chlorohalonatus (strain IBT 40285)).